Consider the following 253-residue polypeptide: 5-oxoprolinase subunit A (253 aa).

The protein belongs to the LamB/PxpA family. As to quaternary structure, forms a complex composed of PxpA, PxpB and PxpC.

It carries out the reaction 5-oxo-L-proline + ATP + 2 H2O = L-glutamate + ADP + phosphate + H(+). Catalyzes the cleavage of 5-oxoproline to form L-glutamate coupled to the hydrolysis of ATP to ADP and inorganic phosphate. The polypeptide is 5-oxoprolinase subunit A (Bacillus cereus (strain AH820)).